Reading from the N-terminus, the 357-residue chain is 3'-hydroxy-N-methyl-(S)-coclaurine 4'-O-methyltransferase 2 (357 aa).

Asp-226 contacts S-adenosyl-L-methionine. The active-site Proton acceptor is His-264.

It belongs to the class I-like SAM-binding methyltransferase superfamily. Cation-independent O-methyltransferase family. COMT subfamily. In terms of assembly, homodimer. As to expression, expressed in roots, stems, leaves and flowers.

It carries out the reaction (S)-3'-hydroxy-N-methylcoclaurine + S-adenosyl-L-methionine = (S)-reticuline + S-adenosyl-L-homocysteine + H(+). It participates in alkaloid biosynthesis; (S)-reticuline biosynthesis; (S)-reticuline from (S)-norcoclaurine: step 4/4. Involved in the biosynthesis of benzylisoquinoline alkaloids. Catalyzes the transfer of the methyl group to the 4'-hydroxyl group of 3'-hydroxy-N-methylcoclaurine to form reticuline. Can also use laudanosoline and, with a lower activity, 6-O-methylnorlaudanosoline and norlaudanosoline as substrates. Also involved in the papaverine biosynthesis. This Papaver somniferum (Opium poppy) protein is 3'-hydroxy-N-methyl-(S)-coclaurine 4'-O-methyltransferase 2.